Here is a 140-residue protein sequence, read N- to C-terminus: ATP synthase epsilon chain, chloroplastic (140 aa).

This sequence belongs to the ATPase epsilon chain family. As to quaternary structure, F-type ATPases have 2 components, CF(1) - the catalytic core - and CF(0) - the membrane proton channel. CF(1) has five subunits: alpha(3), beta(3), gamma(1), delta(1), epsilon(1). CF(0) has three main subunits: a, b and c.

It localises to the plastid. Its subcellular location is the chloroplast thylakoid membrane. Its function is as follows. Produces ATP from ADP in the presence of a proton gradient across the membrane. This is ATP synthase epsilon chain, chloroplastic from Panax ginseng (Korean ginseng).